The primary structure comprises 798 residues: Shutoff protein (798 aa).

The span at 1–14 (MESTADGDKARGEE) shows a compositional bias: basic and acidic residues. Residues 1 to 123 (MESTADGDKA…SHSSDSELGC (123 aa)) are disordered. A compositionally biased stretch (acidic residues) spans 33 to 49 (APEDEHPDDGEPDEPAD). Residues 68–80 (GGRDAECDGEAAR) show a composition bias toward basic and acidic residues. Over residues 86–105 (DESSAPTTPSTAVRRSSGES) the composition is skewed to polar residues. The segment at 309-376 (LMEVLLQPFA…GRPLYRSARA (68 aa)) is binding to host EIF4G. An RRM domain is found at 379-497 (SVFREPSSIK…AIYALETPTE (119 aa)). Position 711 is a phosphotyrosine; by host (Y711). A disordered region spans residues 740-798 (YADHARGAATSAEPSRALRPTSVATAAGNRTRGCSSARYRLGPTLRRRSNSSWPREWST). Positions 789 to 798 (NSSWPREWST) are enriched in polar residues.

The protein belongs to the adenoviridae shutoff protein family. Monomer. Interacts with hexon protein; this interaction allows chaperoning and trimerization of hexon proteins. Interacts (via N-terminus) with host initiation factor EIF4G (via C-terminus). Interacts (via RRM domain) with viral mRNAs that contain the tripartite leader; this interaction allows ribosome shunting and expression of viral late mRNAs. Might be cleaved by the viral protease. In terms of processing, phosphorylated. Tyrosine phosphorylation enhances preferential binding to tripartite leader mRNAs and allows ribosome shunting. Post-translationally, methylated. Asymmetric dimethylation by host PRMT1 of the Arg/Gly-rich region may regulate shutoff protein binding to hexon and promote the capsid assembly in the nucleus.

The protein localises to the host cytoplasm. Functionally, protein that inhibits host translation while promoting late viral translation by ribosome shunting. Blocks host cap-dependent translation by binding to eIF4G, displacing MKNK1 from cap initiation complexes and preventing EIF4E phosphorylation. Binds to the tripartite leader sequence of viral late mRNAs and recruits host eIF4G, PABPC1/poly-A binding protein and 40S ribosomes subunits on viral mRNAs, allowing ribosome shunting and efficient translation of late viral mRNAs even though conventional translation via ribosome scanning from the cap has been shut off in the host cell. During assembly, acts as a chaperone protein that helps hexon proteins assembly into trimers. The protein is Shutoff protein of Galliformes (FAdV-10).